The chain runs to 361 residues: Trehalose 6-phosphate phosphatase RA3 (361 aa).

It belongs to the trehalose phosphatase family. Requires a divalent metal cation as cofactor. In terms of tissue distribution, expressed in axillary inflorescence meristems.

The enzyme catalyses alpha,alpha-trehalose 6-phosphate + H2O = alpha,alpha-trehalose + phosphate. It participates in glycan biosynthesis; trehalose biosynthesis. Removes the phosphate from trehalose 6-phosphate to produce free trehalose. Is specific for trehalose 6-phosphate. Does not possess activity toward glucose, sucrose or fructose 6-phosphates. Regulates inflorescence branching. Required to establish the correct identity and determinacy of axillary meristems in both male and female inflorescences. May act through a sugar signal that moves into axillary meristems. Acts upstream of RA1. May have a transcriptional regulatory function. This Zea mays (Maize) protein is Trehalose 6-phosphate phosphatase RA3.